We begin with the raw amino-acid sequence, 408 residues long: Glutathione-independent formaldehyde dehydrogenase (408 aa).

A Zn(2+)-binding site is contributed by Cys61. NAD(+)-binding residues include Gly62, Ser63, and His66. 6 residues coordinate Zn(2+): His82, Cys112, Cys115, Cys118, Cys126, and Asp184. NAD(+) is bound by residues Val212, Asp232, Arg237, Val277, His284, Pro311, Leu313, Gly348, and Thr350.

It belongs to the zinc-containing alcohol dehydrogenase family. The cofactor is Zn(2+).

The enzyme catalyses formaldehyde + NAD(+) + H2O = formate + NADH + 2 H(+). Activity is not inhibited by EDTA, which is probably not sufficient to displace the bound metal. Dehydrogenase that catalyzes the NAD(+)-dependent oxidation of formaldehyde. Exhibits lower activity with acetaldehyde (about 10-fold lower than for formaldehyde), but cannot use methanol, ethanol, 1-butanol, glyoxal or formic acid. Is involved in formaldehyde detoxification. This Bacillus subtilis (strain 168) protein is Glutathione-independent formaldehyde dehydrogenase.